The chain runs to 250 residues: Putative (5-formylfuran-3-yl)methyl phosphate synthase (250 aa).

Residue K29 is the Schiff-base intermediate with substrate of the active site. The active-site Proton acceptor is K87.

This sequence belongs to the MfnB family.

It catalyses the reaction 2 D-glyceraldehyde 3-phosphate = 4-(hydroxymethyl)-2-furancarboxaldehyde phosphate + phosphate + 2 H2O. Its function is as follows. Catalyzes the formation of 4-(hydroxymethyl)-2-furancarboxaldehyde phosphate (4-HFC-P) from two molecules of glyceraldehyde-3-P (GA-3-P). This is Putative (5-formylfuran-3-yl)methyl phosphate synthase from Streptomyces griseus subsp. griseus (strain JCM 4626 / CBS 651.72 / NBRC 13350 / KCC S-0626 / ISP 5235).